The primary structure comprises 196 residues: Peptidyl-tRNA hydrolase (196 aa).

Y18 serves as a coordination point for tRNA. The active-site Proton acceptor is the H23. The tRNA site is built by F69, N71, and N117.

The protein belongs to the PTH family. As to quaternary structure, monomer.

It is found in the cytoplasm. It carries out the reaction an N-acyl-L-alpha-aminoacyl-tRNA + H2O = an N-acyl-L-amino acid + a tRNA + H(+). Hydrolyzes ribosome-free peptidyl-tRNAs (with 1 or more amino acids incorporated), which drop off the ribosome during protein synthesis, or as a result of ribosome stalling. Its function is as follows. Catalyzes the release of premature peptidyl moieties from peptidyl-tRNA molecules trapped in stalled 50S ribosomal subunits, and thus maintains levels of free tRNAs and 50S ribosomes. The polypeptide is Peptidyl-tRNA hydrolase (Vibrio parahaemolyticus serotype O3:K6 (strain RIMD 2210633)).